The primary structure comprises 225 residues: MGHKVNPIGLRLGINRTWDSRWYAGGDYSRLLHDDLKLRGHLRKKLSGAGVSRVVIERPAKKPRVTIYAARPGVVIGKKGQDIEALRKGLTGMAGTDVALNIVEIRKPEIDATLVAENIAQQLERRVAFRRAMKRAVQSAMRLGAQGIRINCSGRLGGAEIARIEWYREGRVPLHTLRADIDYGVATAKTTYGTCGVKVWIFKGEILAQDPMAQDRRAAEQAPQR.

The 69-residue stretch at 38 to 106 (LRGHLRKKLS…DVALNIVEIR (69 aa)) folds into the KH type-2 domain.

The protein belongs to the universal ribosomal protein uS3 family. In terms of assembly, part of the 30S ribosomal subunit. Forms a tight complex with proteins S10 and S14.

In terms of biological role, binds the lower part of the 30S subunit head. Binds mRNA in the 70S ribosome, positioning it for translation. The protein is Small ribosomal subunit protein uS3 of Granulibacter bethesdensis (strain ATCC BAA-1260 / CGDNIH1).